We begin with the raw amino-acid sequence, 385 residues long: 1-deoxy-D-xylulose 5-phosphate reductoisomerase (385 aa).

Positions 13, 14, 15, 16, 40, and 122 each coordinate NADPH. K123 is a 1-deoxy-D-xylulose 5-phosphate binding site. E124 lines the NADPH pocket. D148 is a Mn(2+) binding site. 4 residues coordinate 1-deoxy-D-xylulose 5-phosphate: S149, E150, S177, and H200. Residue E150 participates in Mn(2+) binding. G206 contacts NADPH. Residues S213, N218, K219, and E222 each coordinate 1-deoxy-D-xylulose 5-phosphate. E222 is a binding site for Mn(2+).

The protein belongs to the DXR family. Mg(2+) serves as cofactor. It depends on Mn(2+) as a cofactor.

It carries out the reaction 2-C-methyl-D-erythritol 4-phosphate + NADP(+) = 1-deoxy-D-xylulose 5-phosphate + NADPH + H(+). It participates in isoprenoid biosynthesis; isopentenyl diphosphate biosynthesis via DXP pathway; isopentenyl diphosphate from 1-deoxy-D-xylulose 5-phosphate: step 1/6. In terms of biological role, catalyzes the NADPH-dependent rearrangement and reduction of 1-deoxy-D-xylulose-5-phosphate (DXP) to 2-C-methyl-D-erythritol 4-phosphate (MEP). The chain is 1-deoxy-D-xylulose 5-phosphate reductoisomerase from Francisella tularensis subsp. tularensis (strain WY96-3418).